The sequence spans 121 residues: MNALQEDTPPGPSTVFRPPTSSRPLETPHCREIRIGIAGITITLSLCGCANARAPTLRSATADNSESTGFKNVPDLRTDQPKPPSKKRSCDPSEYRVSELKESLITTTPSRPRTAKRRIRL.

2 disordered regions span residues methionine 1–proline 28 and leucine 57–leucine 121. Polar residues predominate over residues arginine 58–phenylalanine 70. Positions arginine 88–glutamate 102 are enriched in basic and acidic residues.

The protein belongs to the gyrovirus apoptin family.

The protein localises to the host nucleus. Functionally, may act as transcriptional regulator. Induces apoptosis in infected cells. Element of infectious replication cycle. The chain is Apoptin (VP3) from Gallus gallus (Chicken).